The sequence spans 146 residues: Leghemoglobin 49 (146 aa).

In terms of domain architecture, Globin spans 2-146 (GFTQQQEALV…LATAIKKAMS (145 aa)). Nitrated tyrosine occurs at positions 24 and 29. Residue Ser-44 coordinates heme b. A Phosphoserine modification is found at Ser-44. His-61 is a binding site for O2. Heme b contacts are provided by His-93 and Lys-96. At Tyr-134 the chain carries Nitrated tyrosine.

It belongs to the plant globin family. In terms of assembly, monomer. Nitrated in effective nodules and particularly in hypoxic conditions; this mechanism may play a protective role in the symbiosis by buffering toxic peroxynitrite NO(2)(-). Nitration level decrease during nodule senescence. In terms of processing, phosphorylation at Ser-44 disrupts the molecular environment of its porphyrin ring oxygen binding pocket, thus leading to a reduced oxygen consumption and to the delivery of oxygen O(2) to symbiosomes. As to expression, accumulates in root nodules after inoculation by bacteria of the genus Rhizobium.

The protein localises to the cytoplasm. It localises to the cytosol. It is found in the nucleus. In terms of biological role, leghemoglobin that reversibly binds oxygen O(2) through a pentacoordinated heme iron. In root nodules, facilitates the diffusion of oxygen to the bacteroids while preventing the bacterial nitrogenase from being inactivated by buffering dioxygen, nitric oxide and carbon monoxide, and promoting the formation of reactive oxygen species (ROS, e.g. H(2)O(2)). This role is essential for symbiotic nitrogen fixation (SNF). The protein is Leghemoglobin 49 of Vicia faba (Broad bean).